We begin with the raw amino-acid sequence, 742 residues long: Phosphoribosylformylglycinamidine synthase subunit PurL (742 aa).

The active site involves H54. 2 residues coordinate ATP: Y57 and K96. E98 is a Mg(2+) binding site. Substrate-binding positions include 99–102 (SHNH) and R121. The active-site Proton acceptor is H100. D122 is a Mg(2+) binding site. Residues G225 and Q245 each contribute to the substrate site. Mg(2+) is bound at residue D273. 317-319 (ESQ) contacts substrate. G537 is an ATP binding site. N538 lines the Mg(2+) pocket. S540 contributes to the substrate binding site.

It belongs to the FGAMS family. In terms of assembly, monomer. Part of the FGAM synthase complex composed of 1 PurL, 1 PurQ and 2 PurS subunits.

It localises to the cytoplasm. It catalyses the reaction N(2)-formyl-N(1)-(5-phospho-beta-D-ribosyl)glycinamide + L-glutamine + ATP + H2O = 2-formamido-N(1)-(5-O-phospho-beta-D-ribosyl)acetamidine + L-glutamate + ADP + phosphate + H(+). The catalysed reaction is L-glutamine + H2O = L-glutamate + NH4(+). Its pathway is purine metabolism; IMP biosynthesis via de novo pathway; 5-amino-1-(5-phospho-D-ribosyl)imidazole from N(2)-formyl-N(1)-(5-phospho-D-ribosyl)glycinamide: step 1/2. Functionally, part of the phosphoribosylformylglycinamidine synthase complex involved in the purines biosynthetic pathway. Catalyzes the ATP-dependent conversion of formylglycinamide ribonucleotide (FGAR) and glutamine to yield formylglycinamidine ribonucleotide (FGAM) and glutamate. The FGAM synthase complex is composed of three subunits. PurQ produces an ammonia molecule by converting glutamine to glutamate. PurL transfers the ammonia molecule to FGAR to form FGAM in an ATP-dependent manner. PurS interacts with PurQ and PurL and is thought to assist in the transfer of the ammonia molecule from PurQ to PurL. The polypeptide is Phosphoribosylformylglycinamidine synthase subunit PurL (Bacillus subtilis (strain 168)).